The following is a 1324-amino-acid chain: Sal-like protein 1 (1324 aa).

The segment at methionine 1–alanine 42 is disordered. Residues proline 22 to alanine 42 are compositionally biased toward basic and acidic residues. The C2H2-type 1; atypical zinc-finger motif lies at histidine 43–cysteine 65. 4 disordered regions span residues asparagine 77–valine 102, valine 108–valine 127, alanine 132–isoleucine 172, and proline 317–glycine 336. The segment covering leucine 113–serine 124 has biased composition (basic and acidic residues). A compositionally biased stretch (low complexity) spans serine 135–serine 158. Polar residues predominate over residues leucine 321–glycine 336. A Glycyl lysine isopeptide (Lys-Gly) (interchain with G-Cter in SUMO2) cross-link involves residue lysine 439. C2H2-type zinc fingers lie at residues histidine 449–histidine 471 and phenylalanine 477–histidine 499. A disordered region spans residues proline 577–alanine 646. Serine 590, serine 593, and serine 595 each carry phosphoserine. The segment covering serine 633–alanine 646 has biased composition (low complexity). Glycyl lysine isopeptide (Lys-Gly) (interchain with G-Cter in SUMO2) cross-links involve residues lysine 673, lysine 690, and lysine 701. 3 C2H2-type zinc fingers span residues asparagine 706–histidine 728, phenylalanine 734–histidine 756, and histidine 766–histidine 788. Disordered regions lie at residues glycine 790–leucine 856 and glutamate 894–threonine 963. Polar residues predominate over residues tyrosine 802–glycine 811. Positions aspartate 820–proline 833 are enriched in acidic residues. The span at serine 843–leucine 856 shows a compositional bias: low complexity. A compositionally biased stretch (polar residues) spans threonine 899–glutamine 936. The span at glutamate 937–glutamine 949 shows a compositional bias: basic and acidic residues. Serine 941 and serine 943 each carry phosphoserine. Glycyl lysine isopeptide (Lys-Gly) (interchain with G-Cter in SUMO2) cross-links involve residues lysine 947 and lysine 982. 2 C2H2-type zinc fingers span residues threonine 1001–histidine 1023 and phenylalanine 1029–histidine 1051. A Glycyl lysine isopeptide (Lys-Gly) (interchain with G-Cter in SUMO2) cross-link involves residue lysine 1086. The segment at valine 1095 to proline 1120 is disordered. Residues threonine 1105 to serine 1119 show a composition bias toward polar residues. C2H2-type zinc fingers lie at residues histidine 1134–histidine 1156 and phenylalanine 1162–histidine 1184. Glycyl lysine isopeptide (Lys-Gly) (interchain with G-Cter in SUMO2) cross-links involve residues lysine 1219, lysine 1299, and lysine 1319.

This sequence belongs to the sal C2H2-type zinc-finger protein family. May associate with NuRD histone deacetylase complex (HDAC). Interacts with components of HDAC complex including HDAC1, HDAC2, RBBP4, RBPP7, MTA1 and MTA2. Interacts with CCNQ. Interacts with NSD2 (via PHD-type zinc fingers 1, 2 and 3). In terms of tissue distribution, highest levels in kidney. Lower levels in adult brain (enriched in corpus callosum, lower expression in substantia nigra) and liver.

The protein localises to the nucleus. Functionally, transcriptional repressor involved in organogenesis. Plays an essential role in ureteric bud invasion during kidney development. The polypeptide is Sal-like protein 1 (SALL1) (Homo sapiens (Human)).